The primary structure comprises 102 residues: Small ribosomal subunit protein uS14 (102 aa).

This sequence belongs to the universal ribosomal protein uS14 family. In terms of assembly, part of the 30S ribosomal subunit. Contacts proteins S3 and S10.

Its function is as follows. Binds 16S rRNA, required for the assembly of 30S particles and may also be responsible for determining the conformation of the 16S rRNA at the A site. The chain is Small ribosomal subunit protein uS14 from Wolbachia pipientis subsp. Culex pipiens (strain wPip).